Reading from the N-terminus, the 156-residue chain is ATP synthase subunit b (156 aa).

A helical transmembrane segment spans residues I3–T23.

It belongs to the ATPase B chain family. As to quaternary structure, F-type ATPases have 2 components, F(1) - the catalytic core - and F(0) - the membrane proton channel. F(1) has five subunits: alpha(3), beta(3), gamma(1), delta(1), epsilon(1). F(0) has three main subunits: a(1), b(2) and c(10-14). The alpha and beta chains form an alternating ring which encloses part of the gamma chain. F(1) is attached to F(0) by a central stalk formed by the gamma and epsilon chains, while a peripheral stalk is formed by the delta and b chains.

The protein resides in the cell inner membrane. F(1)F(0) ATP synthase produces ATP from ADP in the presence of a proton or sodium gradient. F-type ATPases consist of two structural domains, F(1) containing the extramembraneous catalytic core and F(0) containing the membrane proton channel, linked together by a central stalk and a peripheral stalk. During catalysis, ATP synthesis in the catalytic domain of F(1) is coupled via a rotary mechanism of the central stalk subunits to proton translocation. Functionally, component of the F(0) channel, it forms part of the peripheral stalk, linking F(1) to F(0). In Xylella fastidiosa (strain M23), this protein is ATP synthase subunit b.